The chain runs to 405 residues: L-rhamnonate dehydratase (405 aa).

Residues H33 and R59 each coordinate substrate. Mg(2+)-binding residues include D226, E252, and E280. The active-site Proton acceptor is the H329. Residue E349 coordinates substrate.

The protein belongs to the mandelate racemase/muconate lactonizing enzyme family. RhamD subfamily. Homooctamer; tetramer of dimers. The cofactor is Mg(2+).

The enzyme catalyses L-rhamnonate = 2-dehydro-3-deoxy-L-rhamnonate + H2O. In terms of biological role, catalyzes the dehydration of L-rhamnonate to 2-keto-3-deoxy-L-rhamnonate (KDR). The chain is L-rhamnonate dehydratase from Escherichia coli O45:K1 (strain S88 / ExPEC).